The chain runs to 142 residues: Large ribosomal subunit protein uL13 (142 aa).

This sequence belongs to the universal ribosomal protein uL13 family. In terms of assembly, part of the 50S ribosomal subunit.

In terms of biological role, this protein is one of the early assembly proteins of the 50S ribosomal subunit, although it is not seen to bind rRNA by itself. It is important during the early stages of 50S assembly. In Acinetobacter baumannii (strain AB0057), this protein is Large ribosomal subunit protein uL13.